Here is a 68-residue protein sequence, read N- to C-terminus: Large ribosomal subunit protein uL30 (68 aa).

It belongs to the universal ribosomal protein uL30 family. As to quaternary structure, part of the 50S ribosomal subunit.

This chain is Large ribosomal subunit protein uL30, found in Pseudarthrobacter chlorophenolicus (strain ATCC 700700 / DSM 12829 / CIP 107037 / JCM 12360 / KCTC 9906 / NCIMB 13794 / A6) (Arthrobacter chlorophenolicus).